Reading from the N-terminus, the 369-residue chain is Phosphoribosyl pyrophosphate synthase-associated protein 2 (369 aa).

Methionine 1 bears the N-acetylmethionine mark. Threonine 5 is modified (phosphothreonine). Phosphoserine is present on residues serine 219, serine 227, and serine 233.

The protein belongs to the ribose-phosphate pyrophosphokinase family. In terms of assembly, binds to PRPS1 and PRPS2.

Its function is as follows. Seems to play a negative regulatory role in 5-phosphoribose 1-diphosphate synthesis. This Pongo abelii (Sumatran orangutan) protein is Phosphoribosyl pyrophosphate synthase-associated protein 2 (PRPSAP2).